The sequence spans 592 residues: Cytosolic purine 5'-nucleotidase (592 aa).

The segment covering 1-15 (MAENNNNNNNNNNNN) has biased composition (low complexity). Positions 1-37 (MAENNNNNNNNNNNNVSTPPHQKPHLTTGLRTSSSGL) are disordered. The Nucleophile role is filled by Asp122. IMP-binding residues include Asp122 and Asp124. Residues Asp122 and Asp124 each contribute to the Mg(2+) site. Asp124 acts as the Proton donor in catalysis. Asn226 is an ATP binding site. Residues 252 to 273 (LTEEVADEQQQMNSPPLSSLGS) are disordered. Residues 259–273 (EQQQMNSPPLSSLGS) show a composition bias toward polar residues. Arg299, Asp303, Lys312, Thr347, Asn348, Ser349, and Lys385 together coordinate IMP. Asp444 is a binding site for Mg(2+). Positions 547 and 550 each coordinate ATP.

This sequence belongs to the 5'(3')-deoxyribonucleotidase family. As to quaternary structure, homotetramer. Mg(2+) serves as cofactor.

Its subcellular location is the cytoplasm. The protein localises to the cytosol. The catalysed reaction is a ribonucleoside 5'-phosphate + H2O = a ribonucleoside + phosphate. It carries out the reaction a 2'-deoxyribonucleoside + a ribonucleoside 5'-phosphate = a ribonucleoside + a 2'-deoxyribonucleoside 5'-phosphate. Broad specificity cytosolic 5'-nucleotidase that catalyzes the dephosphorylation of 6-hydroxypurine nucleoside 5'-monophosphates. In addition, possesses a phosphotransferase activity by which it can transfer a phosphate from a donor nucleoside monophosphate to an acceptor nucleoside. Through these activities regulates the purine nucleoside/nucleotide pools within the cell. This Dictyostelium discoideum (Social amoeba) protein is Cytosolic purine 5'-nucleotidase (nt5c2).